The following is a 110-amino-acid chain: MSVVIRLARAGTKKRPVYHVVVADSRFPRDGRFIERLGYFNPLLPKDNEARLKLDMEKVKAWVAKGAQPSDRVSRFLDAAGVKKREARNNPQKAVPRKERKAQAEAAAKG.

Positions 79 to 110 are disordered; that stretch reads AAGVKKREARNNPQKAVPRKERKAQAEAAAKG.

This sequence belongs to the bacterial ribosomal protein bS16 family.

The chain is Small ribosomal subunit protein bS16 from Bradyrhizobium diazoefficiens (strain JCM 10833 / BCRC 13528 / IAM 13628 / NBRC 14792 / USDA 110).